The primary structure comprises 290 residues: Nucleotide-binding protein LAR_0375 (290 aa).

ATP is bound at residue glycine 13–threonine 20. Aspartate 63 to serine 66 contacts GTP.

This sequence belongs to the RapZ-like family.

Its function is as follows. Displays ATPase and GTPase activities. This Limosilactobacillus reuteri subsp. reuteri (strain JCM 1112) (Lactobacillus reuteri) protein is Nucleotide-binding protein LAR_0375.